The sequence spans 130 residues: Translation initiation factor 5A (130 aa).

Position 36 is a hypusine (Lys-36).

The protein belongs to the eIF-5A family.

Its subcellular location is the cytoplasm. Functions by promoting the formation of the first peptide bond. The chain is Translation initiation factor 5A (eif5a) from Methanothermobacter thermautotrophicus (strain ATCC 29096 / DSM 1053 / JCM 10044 / NBRC 100330 / Delta H) (Methanobacterium thermoautotrophicum).